Here is a 393-residue protein sequence, read N- to C-terminus: NAD(P)H-quinone oxidoreductase subunit H, chloroplastic (393 aa).

It belongs to the complex I 49 kDa subunit family. As to quaternary structure, NDH is composed of at least 16 different subunits, 5 of which are encoded in the nucleus.

Its subcellular location is the plastid. It is found in the chloroplast thylakoid membrane. It catalyses the reaction a plastoquinone + NADH + (n+1) H(+)(in) = a plastoquinol + NAD(+) + n H(+)(out). The enzyme catalyses a plastoquinone + NADPH + (n+1) H(+)(in) = a plastoquinol + NADP(+) + n H(+)(out). In terms of biological role, NDH shuttles electrons from NAD(P)H:plastoquinone, via FMN and iron-sulfur (Fe-S) centers, to quinones in the photosynthetic chain and possibly in a chloroplast respiratory chain. The immediate electron acceptor for the enzyme in this species is believed to be plastoquinone. Couples the redox reaction to proton translocation, and thus conserves the redox energy in a proton gradient. This is NAD(P)H-quinone oxidoreductase subunit H, chloroplastic from Saccharum hybrid (Sugarcane).